The primary structure comprises 1118 residues: MSSTRHSYSSGGSGKSKHGRRIAQTSADAKLYAAYEESSESGSFDYSQSVSAGKEGISSQLVTAYLQRMQRGGLVQQFGCLIAVEEETFRVLAYGANAPEMLDVATQAVPTMGQYSRLCIGADVRTLLSPASASALDRVIGVVDVSMFNPITVQSRSSGKPFYAILHRNDVGLVIDLEPIRPDDASITGGALQSHKLAAKAIARLQSLPGGDIGLLCDSVVEEVHELTGFDRVMAYKFHEDEHGEVVAEIRRTDLEPYIGLHYPATDIPQAARFLFMKNRVRMICDCRLPPVKLIQDKTLSQPMSLTGSKLRAPHGCHTQYMANMNSISSLVMAVIVNDSDDDSPGHSSQGIKLWGLVVCHHTSPRYVPFPVRSACEFLMQVFSLQLNMEVGMAAQVREKHILRTQTLLCDMLLRDAPIGIVSQSPNIMDLVTCDGAALYYGKKCWLLGTTPTEAQIVDIAAWLLDCHKDSTGLSTDSLAKTGYPEASCLGDAVCGLAAAKITATDFLFWFRSHTAKEVRWGGARHDPEERDDGRRMHPRSSFKAFLEVVKQQSLPWEDVEMDAIHSLQLILRGSFQDIDDSNTKTMIHARLNDLKLQGLDELSTVASEMVRLIETATAPILAVDGQGLINGWNGKVAELTGLSFETAMGKSLAKELVHEESKTIVERVLHLALEGEEEQDIEIHLRTYDQHKQKGVVILIVNTCCSRDVSNNVVGVCFVGQDVTGQKLVLDRFIRIQGDYKAIVQSLNPLIPPIFGADEYGFCSEWNAAMEKLSNWRREEVLGKMLVGEIFGLQMVCCRLQGQDVVTKLMIVLNDAVNGQESEKFPLVFYDRNGRRVEALLIASKRTDADGRITGVFCFLHTASPELLQALIIKRAKEKVDKELSYVKEELKKPLEGLAFTRTVLEGTNLTIEQRQLIKTNAWCERQLRKILEDDLNNIEEGYMDLEMSEFFMGSVIDAVISQGMAASRGKGVQILTEIPNDVKLMCLFGDQARLQQVLADLLFCAINHATTTNEDEKDWVTIKVSRTKTRLDDGVHLMHFEFRISHSGQGISEALVEEMTNKSQKWTPEGLAISISCTLIRLMNGDVKYTTDAGNKCFLVTIQFPLAHRDDATSVR.

Over residues 1–10 (MSSTRHSYSS) the composition is skewed to low complexity. Residues 1 to 23 (MSSTRHSYSSGGSGKSKHGRRIA) form a disordered region. The region spanning 212 to 391 (DIGLLCDSVV…VFSLQLNMEV (180 aa)) is the GAF domain. Phytochromobilin is bound at residue C317. 2 PAS domains span residues 606–677 (VASE…LEGE) and 740–811 (DYKA…TKLM). The region spanning 887–1110 (YVKEELKKPL…LVTIQFPLAH (224 aa)) is the Histidine kinase domain.

It belongs to the phytochrome family. Homodimer. Contains one covalently linked phytochromobilin chromophore.

Its function is as follows. Regulatory photoreceptor which exists in two forms that are reversibly interconvertible by light: the Pr form that absorbs maximally in the red region of the spectrum and the Pfr form that absorbs maximally in the far-red region. Photoconversion of Pr to Pfr induces an array of morphogenic responses, whereas reconversion of Pfr to Pr cancels the induction of those responses. Pfr controls the expression of a number of nuclear genes including those encoding the small subunit of ribulose-bisphosphate carboxylase, chlorophyll A/B binding protein, protochlorophyllide reductase, rRNA, etc. It also controls the expression of its own gene(s) in a negative feedback fashion. The sequence is that of Phytochrome 1 (PHY1) from Adiantum capillus-veneris (Maidenhair fern).